The sequence spans 299 residues: Palmitoyltransferase ZDHHC3 (299 aa).

Over methionine 1–cysteine 47 the chain is Cytoplasmic. The residue at position 18 (tyrosine 18) is a Phosphotyrosine. Residues alanine 48–isoleucine 68 form a helical membrane-spanning segment. At proline 69–aspartate 72 the chain is on the lumenal side. Residues tyrosine 73–serine 93 form a helical membrane-spanning segment. Over histidine 94–tyrosine 171 the chain is Cytoplasmic. Positions lysine 128–lysine 254 constitute a DHHC domain. Residue cysteine 146 is the site of S-palmitoyl cysteine attachment. Cysteine 157 acts as the S-palmitoyl cysteine intermediate in catalysis. A helical membrane pass occupies residues phenylalanine 172–phenylalanine 192. Residues histidine 193–valine 214 lie on the Lumenal side of the membrane. The chain crosses the membrane as a helical span at residues isoleucine 215–phenylalanine 235. The Cytoplasmic portion of the chain corresponds to glycine 236–valine 299.

The protein belongs to the DHHC palmitoyltransferase family. As to quaternary structure, monomer. Homooligomers. The monomeric form has a higher catalytic activity. Forms heterooligomers with ZDHHC7. Interacts with TNFRSF10A. Phosphorylation by FGFR1 and SRC probably regulates the palmitoyltransferase activity. Post-translationally, autopalmitoylated.

The protein localises to the golgi apparatus membrane. The enzyme catalyses L-cysteinyl-[protein] + hexadecanoyl-CoA = S-hexadecanoyl-L-cysteinyl-[protein] + CoA. It catalyses the reaction L-cysteinyl-[protein] + tetradecanoyl-CoA = S-tetradecanoyl-L-cysteinyl-[protein] + CoA. The catalysed reaction is L-cysteinyl-[protein] + octadecanoyl-CoA = S-octadecanoyl-L-cysteinyl-[protein] + CoA. Functionally, golgi-localized palmitoyltransferase that catalyzes the addition of palmitate onto various protein substrates. Has no stringent fatty acid selectivity and in addition to palmitate can also transfer onto target proteins myristate from tetradecanoyl-CoA and stearate from octadecanoyl-CoA. Plays an important role in G protein-coupled receptor signaling pathways involving GNAQ and potentially other heterotrimeric G proteins by regulating their dynamic association with the plasma membrane. Palmitoylates ITGA6 and ITGB4, thereby regulating the alpha-6/beta-4 integrin localization, expression and function in cell adhesion to laminin. Plays a role in the TRAIL-activated apoptotic signaling pathway most probably through the palmitoylation and localization to the plasma membrane of TNFRSF10A. In the brain, by palmitoylating the gamma subunit GABRG2 of GABA(A) receptors and regulating their postsynaptic accumulation, plays a role in synaptic GABAergic inhibitory function and GABAergic innervation. Palmitoylates the neuronal protein GAP43 which is also involved in the formation of GABAergic synapses. Palmitoylates NCDN thereby regulating its association with endosome membranes. Probably palmitoylates PRCD and is involved in its proper localization within the photoreceptor. Could mediate the palmitoylation of NCAM1 and regulate neurite outgrowth. Could palmitoylate DNAJC5 and regulate its localization to Golgi membranes. Also constitutively palmitoylates DLG4. May also palmitoylate SNAP25. Could palmitoylate the glutamate receptors GRIA1 and GRIA2 but this has not been confirmed in vivo. Could also palmitoylate the D(2) dopamine receptor DRD2. May also palmitoylate LAMTOR1, promoting its localization to lysosomal membranes. Palmitoylates the Toll-like receptor 9/TLR9 in the Golgi and thereby regulates TLR9 trafficking to endosomes. May palmitoylate CALHM1 and CALHM3 subunits of gustatory voltage-gated ion channels and modulate channel gating and kinetics. This Rattus norvegicus (Rat) protein is Palmitoyltransferase ZDHHC3.